A 415-amino-acid chain; its full sequence is Imidazolonepropionase (415 aa).

Fe(3+)-binding residues include His74 and His76. Zn(2+) contacts are provided by His74 and His76. 4-imidazolone-5-propanoate-binding residues include Arg83, Tyr146, and His179. Residue Tyr146 participates in N-formimidoyl-L-glutamate binding. A Fe(3+)-binding site is contributed by His244. His244 provides a ligand contact to Zn(2+). Gln247 contacts 4-imidazolone-5-propanoate. Asp319 contacts Fe(3+). Asp319 contacts Zn(2+). 2 residues coordinate N-formimidoyl-L-glutamate: Asn321 and Gly323. Residue Thr324 participates in 4-imidazolone-5-propanoate binding.

It belongs to the metallo-dependent hydrolases superfamily. HutI family. Zn(2+) serves as cofactor. It depends on Fe(3+) as a cofactor.

It is found in the cytoplasm. It carries out the reaction 4-imidazolone-5-propanoate + H2O = N-formimidoyl-L-glutamate. It functions in the pathway amino-acid degradation; L-histidine degradation into L-glutamate; N-formimidoyl-L-glutamate from L-histidine: step 3/3. Functionally, catalyzes the hydrolytic cleavage of the carbon-nitrogen bond in imidazolone-5-propanoate to yield N-formimidoyl-L-glutamate. It is the third step in the universal histidine degradation pathway. This is Imidazolonepropionase from Cupriavidus metallidurans (strain ATCC 43123 / DSM 2839 / NBRC 102507 / CH34) (Ralstonia metallidurans).